We begin with the raw amino-acid sequence, 763 residues long: Ras and Rab interactor 1 (763 aa).

Methionine 1 carries the N-acetylmethionine modification. The tract at residues 1–52 is disordered; the sequence is MEDPGETGAHPLGATNLNFVPGHQQKEKPSTDPLYDTPDTRGVQAGGSQQPA. Tyrosine 35 is modified (phosphotyrosine; by ABL1 and ABL2). Positions 68–151 constitute an SH2 domain; it reads WLQLRANAAA…QLICGYCRTR (84 aa). Disordered regions lie at residues 177–200, 238–273, and 301–331; these read LNTK…RSPQ, STET…PPRQ, and QEVD…RPRH. Phosphoserine is present on residues serine 198, serine 246, serine 319, and serine 323. Pro residues predominate over residues 245 to 257; it reads LSPPAVPPPPVPV. A compositionally biased stretch (low complexity) spans 316–326; the sequence is SSGSPTTSPRL. Serine 340 is modified (phosphoserine; by PKD/PRKD1). One can recognise a VPS9 domain in the interval 445 to 587; that stretch reads LSADGSLGRL…LSGLSQARAL (143 aa). Phosphoserine is present on serine 598. Residues 613–695 enclose the Ras-associating domain; that stretch reads FQHLLRVAYQ…GYLIYRRAER (83 aa). Arginine 681 carries the post-translational modification Omega-N-methylarginine. The disordered stretch occupies residues 698–763; it reads TQGAVAEKAK…KAEGSQALEE (66 aa). Positions 727–755 are enriched in basic and acidic residues; that stretch reads REGKPRIAVDQEGKDQARGGHIGPEEQKA.

This sequence belongs to the RIN (Ras interaction/interference) family. In terms of assembly, interacts with the GTP-bound form of Ras proteins (NRAS, HRAS and KRAS). This interaction prevents the association between RAF1 and Ras. Interacts with 14-3-3 proteins YWHAB, YWHAE and YWHAZ when phosphorylated on Ser-340. Interacts with the SH3 domain of ABL1 and ABL2. Interacts with RAB5A. The interaction with Ras is probably regulated and antagonized by the interaction with 14-3-3 proteins. The interaction with 14-3-3 proteins is regulated by phosphorylation on Ser-340. Phosphorylated on tyrosine residues by ABL1 and ABL2. Phosphorylation at Ser-340 by PRKD1 induces interaction with 14-3-3 proteins. As to expression, highly expressed in brain. Weakly or no expressed in other tissues, except in testis, where it is expressed at intermediate level. In brain, it is mainly expressed in postnatal forebrain neurons in which it is localized in dendrites and colocalizes with Ras.

The protein localises to the cytoplasm. The protein resides in the membrane. Its subcellular location is the cytoskeleton. In terms of biological role, ras effector protein, which may serve as an inhibitory modulator of neuronal plasticity in aversive memory formation. Can affect Ras signaling at different levels. First, by competing with RAF1 protein for binding to activated Ras. Second, by enhancing signaling from ABL1 and ABL2, which regulate cytoskeletal remodeling. Third, by activating RAB5A, possibly by functioning as a guanine nucleotide exchange factor (GEF) for RAB5A, by exchanging bound GDP for free GTP, and facilitating Ras-activated receptor endocytosis. The sequence is that of Ras and Rab interactor 1 (Rin1) from Mus musculus (Mouse).